The sequence spans 184 residues: Threonylcarbamoyl-AMP synthase (184 aa).

The YrdC-like domain occupies 3 to 184 (AWFIQKAVSV…DAATGAILRQ (182 aa)).

Belongs to the SUA5 family. TsaC subfamily.

The protein localises to the cytoplasm. The catalysed reaction is L-threonine + hydrogencarbonate + ATP = L-threonylcarbamoyladenylate + diphosphate + H2O. Required for the formation of a threonylcarbamoyl group on adenosine at position 37 (t(6)A37) in tRNAs that read codons beginning with adenine. Catalyzes the conversion of L-threonine, HCO(3)(-)/CO(2) and ATP to give threonylcarbamoyl-AMP (TC-AMP) as the acyladenylate intermediate, with the release of diphosphate. This chain is Threonylcarbamoyl-AMP synthase, found in Hahella chejuensis (strain KCTC 2396).